A 639-amino-acid chain; its full sequence is ATP-dependent zinc metalloprotease FtsH (639 aa).

At 1-20 (MNGNNNMNNNGKSNNKKKNK) the chain is on the cytoplasmic side. A helical membrane pass occupies residues 21 to 41 (NWILGLVVVFLISAIFMSYFI). Residues 42-120 (RGGESYKNVP…LSSGKSQASL (79 aa)) are Periplasmic-facing. A helical membrane pass occupies residues 121–141 (IGVLLQTLPWILFFIFFFFIF). At 142 to 639 (RQTQGGGGKV…KEVKGEDVKG (498 aa)) the chain is on the cytoplasmic side. 212–219 (GSPGTGKT) is a binding site for ATP. Residue His434 participates in Zn(2+) binding. Glu435 is an active-site residue. 2 residues coordinate Zn(2+): His438 and Asp510.

In the central section; belongs to the AAA ATPase family. This sequence in the C-terminal section; belongs to the peptidase M41 family. As to quaternary structure, homohexamer. The cofactor is Zn(2+).

Its subcellular location is the cell inner membrane. Acts as a processive, ATP-dependent zinc metallopeptidase for both cytoplasmic and membrane proteins. Plays a role in the quality control of integral membrane proteins. This Borreliella burgdorferi (strain ZS7) (Borrelia burgdorferi) protein is ATP-dependent zinc metalloprotease FtsH.